Here is a 296-residue protein sequence, read N- to C-terminus: 4-hydroxy-tetrahydrodipicolinate synthase (296 aa).

Thr-47 provides a ligand contact to pyruvate. Tyr-136 (proton donor/acceptor) is an active-site residue. The Schiff-base intermediate with substrate role is filled by Lys-164. Position 206 (Val-206) interacts with pyruvate.

It belongs to the DapA family. In terms of assembly, homotetramer; dimer of dimers.

It localises to the cytoplasm. The enzyme catalyses L-aspartate 4-semialdehyde + pyruvate = (2S,4S)-4-hydroxy-2,3,4,5-tetrahydrodipicolinate + H2O + H(+). It participates in amino-acid biosynthesis; L-lysine biosynthesis via DAP pathway; (S)-tetrahydrodipicolinate from L-aspartate: step 3/4. Functionally, catalyzes the condensation of (S)-aspartate-beta-semialdehyde [(S)-ASA] and pyruvate to 4-hydroxy-tetrahydrodipicolinate (HTPA). The polypeptide is 4-hydroxy-tetrahydrodipicolinate synthase (Thermosynechococcus vestitus (strain NIES-2133 / IAM M-273 / BP-1)).